The primary structure comprises 147 residues: Protein-export protein SecB (147 aa).

The protein belongs to the SecB family. Homotetramer, a dimer of dimers. One homotetramer interacts with 1 SecA dimer.

The protein localises to the cytoplasm. In terms of biological role, one of the proteins required for the normal export of preproteins out of the cell cytoplasm. It is a molecular chaperone that binds to a subset of precursor proteins, maintaining them in a translocation-competent state. It also specifically binds to its receptor SecA. This chain is Protein-export protein SecB, found in Neisseria meningitidis serogroup C (strain 053442).